We begin with the raw amino-acid sequence, 487 residues long: GTPase Der (487 aa).

The tract at residues 1–20 (MAKAVRKSNSEETVPIKAPR) is disordered. 2 consecutive EngA-type G domains span residues 28-197 (PVVS…SSKP) and 225-401 (FRLA…SRSR). GTP-binding positions include 34–41 (GRQNVGKS), 83–87 (DTPGL), 149–152 (NKAD), 231–238 (GKPNSGKS), 278–282 (DTAGI), and 343–346 (NKWD). Residues 402–486 (RKVSTSELNK…PVRLEFRSDR (85 aa)) form the KH-like domain.

It belongs to the TRAFAC class TrmE-Era-EngA-EngB-Septin-like GTPase superfamily. EngA (Der) GTPase family. In terms of assembly, associates with the 50S ribosomal subunit.

Functionally, GTPase that plays an essential role in the late steps of ribosome biogenesis. This is GTPase Der from Leptospira borgpetersenii serovar Hardjo-bovis (strain L550).